Here is a 298-residue protein sequence, read N- to C-terminus: Acetylglutamate kinase (298 aa).

Substrate contacts are provided by residues 61 to 62, arginine 83, and asparagine 188; that span reads GG.

Belongs to the acetylglutamate kinase family. ArgB subfamily.

Its subcellular location is the cytoplasm. The catalysed reaction is N-acetyl-L-glutamate + ATP = N-acetyl-L-glutamyl 5-phosphate + ADP. It participates in amino-acid biosynthesis; L-arginine biosynthesis; N(2)-acetyl-L-ornithine from L-glutamate: step 2/4. Catalyzes the ATP-dependent phosphorylation of N-acetyl-L-glutamate. The chain is Acetylglutamate kinase from Syntrophobacter fumaroxidans (strain DSM 10017 / MPOB).